The chain runs to 204 residues: ATP phosphoribosyltransferase (204 aa).

Belongs to the ATP phosphoribosyltransferase family. Short subfamily. Heteromultimer composed of HisG and HisZ subunits.

The protein resides in the cytoplasm. The enzyme catalyses 1-(5-phospho-beta-D-ribosyl)-ATP + diphosphate = 5-phospho-alpha-D-ribose 1-diphosphate + ATP. It functions in the pathway amino-acid biosynthesis; L-histidine biosynthesis; L-histidine from 5-phospho-alpha-D-ribose 1-diphosphate: step 1/9. Catalyzes the condensation of ATP and 5-phosphoribose 1-diphosphate to form N'-(5'-phosphoribosyl)-ATP (PR-ATP). Has a crucial role in the pathway because the rate of histidine biosynthesis seems to be controlled primarily by regulation of HisG enzymatic activity. This is ATP phosphoribosyltransferase from Hydrogenobaculum sp. (strain Y04AAS1).